Reading from the N-terminus, the 343-residue chain is Labda-7,13(16),14-triene synthase (343 aa).

Asp-114 and Glu-119 together coordinate Mg(2+). Positions 114–119 match the DDXXXE motif motif; that stretch reads DDVHVE. Arg-206 lines the substrate pocket. Mg(2+) contacts are provided by Asn-252, Ser-256, and Glu-260. Positions 252–260 match the NXXXSXXXE motif motif; it reads NDLYSFAYE.

The protein belongs to the terpene synthase family. Mg(2+) is required as a cofactor.

The enzyme catalyses (13E)-labda-7,13-dien-15-yl diphosphate = labda-7,13(16),14-triene + diphosphate. Its function is as follows. Involved in the biosynthesis of the labdane-type bicyclic diterpene labda-7,13(16),14-triene. Catalyzes the conversion of labda-7,13(E)-dienyl diphosphate to yield labda-7,13(16),14-triene. This is Labda-7,13(16),14-triene synthase from Streptomyces clavuligerus.